A 209-amino-acid chain; its full sequence is Kinetochore protein Spc25 (209 aa).

Positions 74 to 107 (TRAVREKLAEERQKNAEMQAQLEKANDERIEQMD) form a coiled coil.

Belongs to the SPC25 family. In terms of assembly, component of the Ndc80 complex, which is composed of Ndc80, Nuf2 and Spc25.

The protein localises to the nucleus. Its subcellular location is the chromosome. It localises to the centromere. The protein resides in the kinetochore. Its function is as follows. Acts as a component of the essential kinetochore-associated Ndc80 complex, which is required for chromosome segregation and spindle checkpoint activity during meiosis and mitosis. Required for kinetochore integrity and the organization of stable microtubule binding sites in the outer plate of the kinetochore. Participates in SAC signaling that responds specifically to disruptions in spindle microtubule dynamics. The NDC80 complex synergistically enhances the affinity of the SKA1 complex for microtubules and may allow the NDC80 complex to track depolymerizing microtubules. This chain is Kinetochore protein Spc25, found in Drosophila grimshawi (Hawaiian fruit fly).